The chain runs to 154 residues: Ribonuclease 8 (154 aa).

An N-terminal signal peptide occupies residues 1-27 (MAPARAGCCPLLLLLLGLWVAEVLVRA). His-42 serves as the catalytic Proton acceptor. 4 disulfide bridges follow: Cys-50–Cys-93, Cys-64–Cys-118, Cys-82–Cys-133, and Cys-89–Cys-96. Substrate-binding positions include 65 to 69 (KDLNT) and Lys-90. The Proton donor role is filled by His-149.

The protein belongs to the pancreatic ribonuclease family. In terms of tissue distribution, expressed prominently in the placenta and is not detected in any other tissues examined.

Its subcellular location is the secreted. Functionally, has a low ribonuclease activity. In Homo sapiens (Human), this protein is Ribonuclease 8 (RNASE8).